We begin with the raw amino-acid sequence, 97 residues long: MTMSTNLCAIYKSPKREGMFLYVAKRDQFDSVPEALRQMFGKPQFVMLFNLNGEKQLKRSKNEEVLQAIQTQGFFLQMPPPPENLLKTFLEQNRGEA.

A YcgL domain is found at 6-90 (NLCAIYKSPK…PPENLLKTFL (85 aa)).

In Actinobacillus pleuropneumoniae serotype 7 (strain AP76), this protein is YcgL domain-containing protein APP7_0754.